The chain runs to 699 residues: Glycine--tRNA ligase beta subunit (699 aa).

This sequence belongs to the class-II aminoacyl-tRNA synthetase family. In terms of assembly, tetramer of two alpha and two beta subunits.

It localises to the cytoplasm. The enzyme catalyses tRNA(Gly) + glycine + ATP = glycyl-tRNA(Gly) + AMP + diphosphate. The polypeptide is Glycine--tRNA ligase beta subunit (Baumannia cicadellinicola subsp. Homalodisca coagulata).